Consider the following 316-residue polypeptide: Annexin D5 (316 aa).

The residue at position 2 (alanine 2) is an N-acetylalanine. Annexin repeat units lie at residues 11 to 82 (PSPR…LWMP), 83 to 154 (EAVE…AYLN), 166 to 238 (ASVE…TILQ), and 242 to 313 (NSCF…SLLG). Phenylalanine 24, glycine 26, glycine 28, and glutamate 68 together coordinate Ca(2+). A Phosphoserine modification is found at serine 95. At threonine 112 the chain carries Phosphothreonine. Glycine 259 lines the Ca(2+) pocket. Residue tyrosine 284 is modified to Phosphotyrosine. Residues aspartate 299 and threonine 300 each contribute to the Ca(2+) site.

Belongs to the annexin (TC 1.A.31.1) family. Expressed mainly in roots and flowers. Lower in stems and leaves.

The polypeptide is Annexin D5 (ANN5) (Arabidopsis thaliana (Mouse-ear cress)).